A 288-amino-acid polypeptide reads, in one-letter code: Pyridoxal kinase PdxY (288 aa).

Residues S12 and 47–48 (TQ) contribute to the substrate site. ATP-binding positions include D114, E151, K184, and 211–214 (RPLL). D225 provides a ligand contact to substrate.

It belongs to the pyridoxine kinase family. PdxY subfamily. As to quaternary structure, homodimer. Mg(2+) is required as a cofactor.

It catalyses the reaction pyridoxal + ATP = pyridoxal 5'-phosphate + ADP + H(+). It functions in the pathway cofactor metabolism; pyridoxal 5'-phosphate salvage; pyridoxal 5'-phosphate from pyridoxal: step 1/1. In terms of biological role, pyridoxal kinase involved in the salvage pathway of pyridoxal 5'-phosphate (PLP). Catalyzes the phosphorylation of pyridoxal to PLP. In Pseudomonas savastanoi pv. phaseolicola (strain 1448A / Race 6) (Pseudomonas syringae pv. phaseolicola (strain 1448A / Race 6)), this protein is Pyridoxal kinase PdxY.